Reading from the N-terminus, the 140-residue chain is Cytochrome b (140 aa).

Residues 38–58 traverse the membrane as a helical segment; that stretch reads FFALHFLLPFVLAALVIMHLI. The heme b site is built by H42 and H56. An a ubiquinone-binding site is contributed by H61. A helical membrane pass occupies residues 85–105; it reads FVFKDLVTIFIFFIVLSIFVF.

It belongs to the cytochrome b family. In terms of assembly, fungal cytochrome b-c1 complex contains 10 subunits; 3 respiratory subunits, 2 core proteins and 5 low-molecular weight proteins. Cytochrome b-c1 complex is a homodimer. The cofactor is heme b.

The protein localises to the mitochondrion inner membrane. Component of the ubiquinol-cytochrome c reductase complex (complex III or cytochrome b-c1 complex) that is part of the mitochondrial respiratory chain. The b-c1 complex mediates electron transfer from ubiquinol to cytochrome c. Contributes to the generation of a proton gradient across the mitochondrial membrane that is then used for ATP synthesis. This Aspergillus terreus protein is Cytochrome b (cob).